A 508-amino-acid polypeptide reads, in one-letter code: Maturase K (508 aa).

It belongs to the intron maturase 2 family. MatK subfamily.

The protein resides in the plastid. It localises to the chloroplast. Functionally, usually encoded in the trnK tRNA gene intron. Probably assists in splicing its own and other chloroplast group II introns. The sequence is that of Maturase K from Ranunculus lingua (Greater spearwort).